A 211-amino-acid polypeptide reads, in one-letter code: Redox-sensing transcriptional repressor Rex (211 aa).

A DNA-binding region (H-T-H motif) is located at residues 18-57; the sequence is LYYRFLENLHASGKQRVSSSELSEAVKVDSATIRRDFSYF. NAD(+) is bound at residue 92–97; that stretch reads GVGNLG.

Belongs to the transcriptional regulatory Rex family. Homodimer.

The protein resides in the cytoplasm. Functionally, modulates transcription in response to changes in cellular NADH/NAD(+) redox state. This chain is Redox-sensing transcriptional repressor Rex, found in Halalkalibacterium halodurans (strain ATCC BAA-125 / DSM 18197 / FERM 7344 / JCM 9153 / C-125) (Bacillus halodurans).